The sequence spans 170 residues: NADH-dependent flavin reductase StyB (170 aa).

This sequence belongs to the non-flavoprotein flavin reductase family. In terms of assembly, homodimer.

It catalyses the reaction a reduced flavin + NAD(+) = an oxidized flavin + NADH + 2 H(+). It functions in the pathway aromatic compound metabolism. Functionally, reductase component of a two-component system that catalyzes the first step in the aerobic styrene degradation pathway by enantioselective epoxidation of the vinyl side chain. Utilizes NADH to reduce FAD, which is then transferred to the styrene monooxygenase StyA. In Pseudomonas fluorescens, this protein is NADH-dependent flavin reductase StyB (styB).